A 382-amino-acid chain; its full sequence is Cytochrome c biogenesis CcmF N-terminal-like mitochondrial protein 1 (382 aa).

4 consecutive transmembrane segments (helical) span residues M1 to F21, A30 to C50, H79 to Y99, and S117 to Y137.

This sequence belongs to the CcmF/CycK/Ccl1/NrfE/CcsA family. In terms of assembly, interacts with CCMFN2 and CCMH.

The protein resides in the mitochondrion inner membrane. Functionally, forms a complex with CCMFC, CCMFN2 and CCMH that performs the assembly of heme with c-type apocytochromes in mitochondria. In Arabidopsis thaliana (Mouse-ear cress), this protein is Cytochrome c biogenesis CcmF N-terminal-like mitochondrial protein 1.